Reading from the N-terminus, the 936-residue chain is Protocadherin gamma-A10 (936 aa).

A signal peptide spans 1–32 (MAAQRNRSKESKDCSGLVLLCLFFGIPWEAGA). Cadherin domains are found at residues 33–137 (RQIS…APKF), 138–246 (QAEN…APVF), 247–351 (TLPE…SPEL), 352–456 (TITS…PPTF), 457–566 (SQVS…APEI), and 574–687 (DGST…SPAN). Residues 33-696 (RQISYSIPEE…NSETSDLTLY (664 aa)) lie on the Extracellular side of the membrane. An N-linked (GlcNAc...) asparagine glycan is attached at Asn51. N-linked (GlcNAc...) asparagine glycans are attached at residues Asn423 and Asn549. A helical membrane pass occupies residues 697–717 (LVVAVAAVSCVFLAFVIVLLA). The Cytoplasmic segment spans residues 718–936 (HRLRRWHKSR…KKKSGKKEKK (219 aa)). Disordered stretches follow at residues 806–845 (EDTPLVPQAPPNTDWRFSQAQRPGTSGSQNGDDTGTWPNN) and 906–936 (ATLTNAAGKRDGKAPAGGNGNKKKSGKKEKK). Positions 820 to 845 (WRFSQAQRPGTSGSQNGDDTGTWPNN) are enriched in polar residues. Basic residues predominate over residues 926–936 (NKKKSGKKEKK).

The protein resides in the cell membrane. In terms of biological role, potential calcium-dependent cell-adhesion protein. May be involved in the establishment and maintenance of specific neuronal connections in the brain. This is Protocadherin gamma-A10 (PCDHGA10) from Homo sapiens (Human).